Consider the following 563-residue polypeptide: MTSSIVLKFFLIATLLVIANSLPACHNGQFLKINKGPNCDDAKYENPDYVIVGGGAAGSVLLDKCISYGYKCTLIERGIDYEDEQVVSQPSGSGLVQSSNAVLLTTTYPNSNIFNKTLVITEPNIIGGSTSINGEISVFTDIENFFEEISIPGWSYLDVLPYYLNVTNSVNRPSHQGAVDVTNTLVTDPKYVAFKAAIQQVFPNIHEKLPDMNTASLNGGFPGYGPPETSVKTSFIPIGDTQVPVSGFRESAYRAYIHPIRNHPNVRIMLRSRVDKVAFDKCGETAKKVFVTYQNYQGSDSQCELKAKKGIILSAGALRTPQILMQSGVGPADHLNELGIPVVSDMPDVGQHLDDHPTVVRTFLGIIPDSSISANIDGHAYWNHLDDPNKVPNWSIQISGFYGPNFKNILNVYMDQMSRGWIKLRSTDPADTPIFNLGHFSDLEDVGPASLGFNKTNQVISNLQYIPIPGLTDVVCPSFIPNCQSNLTEYYMAAYYQFGYSGYHYTGTCAFEKVVDPNTGLVYGFDNLYVVDASVFPKAPRGNTQIGTYAISAKLADIIFGCQ.

An N-terminal signal peptide occupies residues 1–21 (MTSSIVLKFFLIATLLVIANS). 48–77 (DYVIVGGGAAGSVLLDKCISYGYKCTLIER) contacts FAD. Catalysis depends on His-504, which acts as the Proton acceptor.

It belongs to the GMC oxidoreductase family. Requires FAD as cofactor.

This Acanthamoeba polyphaga mimivirus (APMV) protein is Putative GMC-type oxidoreductase L128.